The sequence spans 178 residues: ATP-dependent protease subunit HslV (178 aa).

Residue T7 is part of the active site. Na(+) is bound by residues G162, C165, and T168.

This sequence belongs to the peptidase T1B family. HslV subfamily. As to quaternary structure, a double ring-shaped homohexamer of HslV is capped on each side by a ring-shaped HslU homohexamer. The assembly of the HslU/HslV complex is dependent on binding of ATP.

Its subcellular location is the cytoplasm. The catalysed reaction is ATP-dependent cleavage of peptide bonds with broad specificity.. Allosterically activated by HslU binding. Its function is as follows. Protease subunit of a proteasome-like degradation complex believed to be a general protein degrading machinery. The sequence is that of ATP-dependent protease subunit HslV from Paraburkholderia phymatum (strain DSM 17167 / CIP 108236 / LMG 21445 / STM815) (Burkholderia phymatum).